Here is a 293-residue protein sequence, read N- to C-terminus: 4-hydroxy-tetrahydrodipicolinate synthase (293 aa).

A pyruvate-binding site is contributed by T45. The active-site Proton donor/acceptor is Y133. K161 serves as the catalytic Schiff-base intermediate with substrate. Position 204 (I204) interacts with pyruvate.

Belongs to the DapA family. As to quaternary structure, homotetramer; dimer of dimers.

The protein localises to the cytoplasm. The catalysed reaction is L-aspartate 4-semialdehyde + pyruvate = (2S,4S)-4-hydroxy-2,3,4,5-tetrahydrodipicolinate + H2O + H(+). The protein operates within amino-acid biosynthesis; L-lysine biosynthesis via DAP pathway; (S)-tetrahydrodipicolinate from L-aspartate: step 3/4. Catalyzes the condensation of (S)-aspartate-beta-semialdehyde [(S)-ASA] and pyruvate to 4-hydroxy-tetrahydrodipicolinate (HTPA). This chain is 4-hydroxy-tetrahydrodipicolinate synthase, found in Yersinia pseudotuberculosis serotype O:1b (strain IP 31758).